The sequence spans 743 residues: MTISNTRPITPELIASHGLKPDEYERILSLIRREPTFTELGIFSAMWNEHCSYKSSKKWLRTLPTKGPRVIQGPGENAGVVDIDDGDCVVFKMESHNHPSYIEPYQGAATGVGGILRDVFTMGARPIAAMNALRFGAPDHPKTRHLVSGVVAGVGGYGNSFGVPTVGGEVEFDARYNGNILVNAFAAGLARSDAIFYSKAEGVGLPVVYLGAKTGRDGVGGATMASAEFDESIEEKRPTVQVGDPFTEKCLLEACLELMQTGAVIAIQDMGAAGLTCSAVEMGAKGDLGIELDLDKVPVREERMTAYEMMLSESQERMLMVLRPEKEEEAKAIFVKWGLDFAIVGKTTDDLRFRILHQGEEVANLPIKELGDEAPEYDRPWTPAKSPSPLATNDIPRADVAEALLKLVGSANNSSRRWVYEQYDTLIQGNSLQLPGGDAGVVRVEGHATKALAFSSDVTPRYVEADPFEGGKQAVAECWRNLTATGALPLAATDNLNFGNPERPEIMSQFVHAIKGIGEACRALDFPIVSGNVSLYNETNGQGILPTPTIGGVGLISDWARMARIRFAAADEAILLAGAPEGWGTHIAQSVYMRDVHGRTDGPAPHVDLAHERKVGDFVRGLIADGLVTAVHDCSSGGLALAVAEMAMASGIGATIEAPAGHDPIAAFYGEDQGRYVVTVTAEKLEAIASRARDAGLSLPVIGTTGGSAVKLGDAKAVSVEELRSTHEAWFPTYMGGDLAPDN.

Histidine 50 is an active-site residue. 2 residues coordinate ATP: tyrosine 53 and lysine 92. Residue glutamate 94 coordinates Mg(2+). Substrate-binding positions include 95–98 (SHNH) and arginine 117. Histidine 96 functions as the Proton acceptor in the catalytic mechanism. Aspartate 118 is a Mg(2+) binding site. Glutamine 241 contributes to the substrate binding site. Residue aspartate 269 participates in Mg(2+) binding. 313 to 315 (ESQ) provides a ligand contact to substrate. ATP contacts are provided by aspartate 494 and glycine 531. Asparagine 532 contacts Mg(2+). Residue serine 534 participates in substrate binding.

Belongs to the FGAMS family. In terms of assembly, monomer. Part of the FGAM synthase complex composed of 1 PurL, 1 PurQ and 2 PurS subunits.

Its subcellular location is the cytoplasm. The enzyme catalyses N(2)-formyl-N(1)-(5-phospho-beta-D-ribosyl)glycinamide + L-glutamine + ATP + H2O = 2-formamido-N(1)-(5-O-phospho-beta-D-ribosyl)acetamidine + L-glutamate + ADP + phosphate + H(+). Its pathway is purine metabolism; IMP biosynthesis via de novo pathway; 5-amino-1-(5-phospho-D-ribosyl)imidazole from N(2)-formyl-N(1)-(5-phospho-D-ribosyl)glycinamide: step 1/2. Part of the phosphoribosylformylglycinamidine synthase complex involved in the purines biosynthetic pathway. Catalyzes the ATP-dependent conversion of formylglycinamide ribonucleotide (FGAR) and glutamine to yield formylglycinamidine ribonucleotide (FGAM) and glutamate. The FGAM synthase complex is composed of three subunits. PurQ produces an ammonia molecule by converting glutamine to glutamate. PurL transfers the ammonia molecule to FGAR to form FGAM in an ATP-dependent manner. PurS interacts with PurQ and PurL and is thought to assist in the transfer of the ammonia molecule from PurQ to PurL. This chain is Phosphoribosylformylglycinamidine synthase subunit PurL, found in Sinorhizobium fredii (strain HH103).